A 1344-amino-acid chain; its full sequence is MAEMKSPTKAEPATPAEAAQSDRHSLLEHSREFLDFFWDIAKPDQETRLRATEKLLEYLRTRPNDSEMKYALKRLITGLGVGREAARPCYSLALAQLLQSFEDIPLCDILDQIQEKYSLQAMNKAMMRPSLFANLFGVLALFQSGRLVKDKEALMKSVQLLKILSQHPNHLQGQPIKALVDILSEVPESMFQEILPKVLKGNMKVILRSPKYLELFLLAKQRVPTKLESLMGSVDLFSEDNIPSLVNILKVAANSVKKEHKLPNVALDLLRLALKESRFELFWKKVLEEGLLKNPSWTSSYMCFRLLGASLPLLSEEQLQLVMRGDLIRHFGENMVISKPQNLFKIIPEISTYVGTFLEGCQDDPKRQLTMMVAFTTITNQGLPVMPTFWRVTRFLNAEALQSYVAWLRDMFLQPDLNSLVDFSTANQKRAQDASLNVPERAVFRLRKWIIHRLVSLVDHLHLEKDEAVVEQIARFCLFHAFFKTKKATPQIPETKQHFSFPLDDRNRGVFVSAFFSLLQTLSVKFRQTPDLAENGKPWTYRLVQLADMLLNHNRNVTSVTSLTTQQRQAWDQMMSTLKELEARSSETRAIAFQHLLLLVGLHIFKSPAESCDVLGDIQTCIKKSMEQNPRRSRSRAKASQEPVWVEVMVEILLSLLAQPSNLMRQVVRSVFGHICPHLTPRCLQLILAVLSPVTNEDEDDNVVVTDDADEKQLQHGEDEDSDNEDNKNSESDMDSEDGEESEEEDRDKDVDPGFRQQLMEVLKAGNALGGVDNEEEEELGDEAMMALDQNLASLFKEQKMRIQARNEEKNKLQKEKKLRRDFQIRALDLIEVLVTKQPEHPLILELLEPLLNVIQHSMRSKGSTKQEQDLLHKTARIFMHHLCRARRYCHEVGPCAEALHAQVERLVQQAGSQADASVALYYFNASLYLLRVLKGNTNKRHQDGHKLHGADTEDSEDQAANCLDLDFVTRVYSASLESLLTKRNSSLTVPMFLSLFSRYPVICKNLLPVLAQHVAGPSRPRHQAQACLMLQKTLSARELRVCFEDPEWEQLITQLLGKATQTLQTLGEAQSKGEHQKELSILELLNTLLRTVNHEKLSVDLTAPLGVLQSKQQKLQQSLQQGNHSSGSNRLYDLYWQAMRMLGVQRPKSEKKNAKDIPSDTQSPVSTKRKKKGFLPETKKRKKLKSEGTTPEKNAASQQDAVTEGAMPAATGKDQPPSTGKKKRKRVKASTPSQVNGITGAKSPAPSNPTLSPSTPAKTPKLQKKKEKLSQVNGATPVSPIEPESKKHHQEALSTKEVIRKSPHPQSALPKKRARLSLVSRSPSLLQSGVKKRRVASRRVQTP.

The tract at residues 1–24 is disordered; it reads MAEMKSPTKAEPATPAEAAQSDRH. The residue at position 2 (A2) is an N-acetylalanine. Residues 2-580 form an interaction with MYB region; sequence AEMKSPTKAE…WDQMMSTLKE (579 aa). A compositionally biased stretch (low complexity) spans 7–19; the sequence is PTKAEPATPAEAA. N6-acetyllysine is present on residues K69 and K156. Short sequence motifs (nuclear export signal) lie at residues 238-256 and 261-279; these read SEDNIPSLVNILKVAANSV and KLPNVALDLLRLALKESRF. Disordered regions lie at residues 710 to 751 and 1146 to 1344; these read DEKQ…DKDV and QRPK…VQTP. Positions 732-747 are enriched in acidic residues; sequence SDMDSEDGEESEEEDR. Over residues 1148–1159 the composition is skewed to basic and acidic residues; the sequence is PKSEKKNAKDIP. K1149 participates in a covalent cross-link: Glycyl lysine isopeptide (Lys-Gly) (interchain with G-Cter in SUMO2). The required for nuclear and nucleolar localization stretch occupies residues 1152–1344; it reads KKNAKDIPSD…RVASRRVQTP (193 aa). Phosphoserine is present on residues S1160 and S1164. Residues 1168–1185 are compositionally biased toward basic residues; the sequence is TKRKKKGFLPETKKRKKL. At S1187 the chain carries Phosphoserine. Residues 1188-1202 show a composition bias toward polar residues; the sequence is EGTTPEKNAASQQDA. The residue at position 1191 (T1191) is a Phosphothreonine. A phosphoserine mark is found at S1219 and S1244. Residues 1249–1258 are compositionally biased toward polar residues; it reads NPTLSPSTPA. T1251 bears the Phosphothreonine mark. S1253 is subject to Phosphoserine. 2 positions are modified to phosphothreonine: T1256 and T1277. Residues S1280, S1303, and S1318 each carry the phosphoserine modification. Positions 1317 to 1329 are enriched in low complexity; the sequence is LSLVSRSPSLLQS. Residue R1322 is modified to Citrulline. Phosphoserine occurs at positions 1323, 1325, and 1329.

This sequence belongs to the MYBBP1A family. As to quaternary structure, component of the B-WICH complex, at least composed of SMARCA5/SNF2H, BAZ1B/WSTF, SF3B1, DEK, MYO1C, ERCC6, MYBBP1A and DDX21. Binds to and represses JUN and MYB via the leucine zipper regions present in these proteins. Also binds to and represses PPARGC1A: this interaction is abrogated when PPARGC1A is phosphorylated by MAPK1/ERK. Binds to and stimulates transcription by AHR. Binds to KPNA2. Interacts with CLOCK and CRY1. Citrullinated by PADI4. As to expression, ubiquitously expressed.

It localises to the nucleus. The protein localises to the nucleolus. Its subcellular location is the cytoplasm. In terms of biological role, may activate or repress transcription via interactions with sequence specific DNA-binding proteins. Repression may be mediated at least in part by histone deacetylase activity (HDAC activity). Acts as a corepressor and in concert with CRY1, represses the transcription of the core circadian clock component PER2. Preferentially binds to dimethylated histone H3 'Lys-9' (H3K9me2) on the PER2 promoter. Has a role in rRNA biogenesis together with PWP1. This Mus musculus (Mouse) protein is Myb-binding protein 1A (Mybbp1a).